A 434-amino-acid polypeptide reads, in one-letter code: MQLLAIGINHTTAPVSLRERVAFPLEQIKPALGALRSHLSGRSGTEAAILSTCNRTEIYCATDVLTPGTDGFEHTLRWLSQHHNVPAGELAPHLYALPQSEAVRHAFRVASGLDSMVLGETQILGQLKDAVRTAGEAGSLGTYLNQLFQRTFAVAKEVRGQTEIGAHSVSMAAAAVRLAQRIFESVSTQRVLFIGAGEMIELCATHFAAQQPRQIVVANRTVERGEKLAEQLSGQGLTANAIRLTDLGERLHEFDIVVSCTASSLPIIGLGAVERAVKRRKHRPIMMVDLAVPRDVEPEVARLDDVFLYTVDDLGAIVREGNAMRQAAVAQAEAIIESRVQNFMHWLETRSVVPVIRELQTSGEAIRQAELERARRMLARGDDPEAVLEALSGALTRKFLHGPTHALNHTQGEDREALLRLVPGLFRHSSHSER.

Residues Thr52–Arg55, Ser115, Glu120–Gln122, and Gln126 contribute to the substrate site. Catalysis depends on Cys53, which acts as the Nucleophile. Gly195 to Ile200 is an NADP(+) binding site.

It belongs to the glutamyl-tRNA reductase family. As to quaternary structure, homodimer.

It catalyses the reaction (S)-4-amino-5-oxopentanoate + tRNA(Glu) + NADP(+) = L-glutamyl-tRNA(Glu) + NADPH + H(+). It functions in the pathway porphyrin-containing compound metabolism; protoporphyrin-IX biosynthesis; 5-aminolevulinate from L-glutamyl-tRNA(Glu): step 1/2. Its function is as follows. Catalyzes the NADPH-dependent reduction of glutamyl-tRNA(Glu) to glutamate 1-semialdehyde (GSA). The polypeptide is Glutamyl-tRNA reductase (Cupriavidus necator (strain ATCC 17699 / DSM 428 / KCTC 22496 / NCIMB 10442 / H16 / Stanier 337) (Ralstonia eutropha)).